Here is a 159-residue protein sequence, read N- to C-terminus: Ribosomal RNA large subunit methyltransferase H (159 aa).

Residues Leu76, Gly107, and 126 to 131 (LSSLTL) contribute to the S-adenosyl-L-methionine site.

Belongs to the RNA methyltransferase RlmH family. Homodimer.

Its subcellular location is the cytoplasm. It catalyses the reaction pseudouridine(1915) in 23S rRNA + S-adenosyl-L-methionine = N(3)-methylpseudouridine(1915) in 23S rRNA + S-adenosyl-L-homocysteine + H(+). Specifically methylates the pseudouridine at position 1915 (m3Psi1915) in 23S rRNA. The sequence is that of Ribosomal RNA large subunit methyltransferase H from Cupriavidus necator (strain ATCC 17699 / DSM 428 / KCTC 22496 / NCIMB 10442 / H16 / Stanier 337) (Ralstonia eutropha).